Here is a 465-residue protein sequence, read N- to C-terminus: uncharacterized protein (465 aa).

A helical membrane pass occupies residues 56-76 (ILYMIIFAIFGLLPFLIALIF). Residues 177–198 (KFNKSKKSNKINDKTPILNNNN) form a disordered region. The helical transmembrane segment at 273–293 (LIFLLVSTILLIALIGFILII) threads the bilayer. Residues 411–449 (NNYNNSNNNNNSNNSNSNNNNNNNNNNNNYNNNNYNNNN) are disordered.

The protein resides in the membrane. This is an uncharacterized protein from Dictyostelium discoideum (Social amoeba).